We begin with the raw amino-acid sequence, 251 residues long: Triosephosphate isomerase (251 aa).

10-12 (NWK) is a binding site for substrate. His99 acts as the Electrophile in catalysis. Glu167 serves as the catalytic Proton acceptor. Substrate is bound by residues Gly173, Ser211, and 232–233 (GG).

It belongs to the triosephosphate isomerase family. As to quaternary structure, homodimer.

It localises to the cytoplasm. It catalyses the reaction D-glyceraldehyde 3-phosphate = dihydroxyacetone phosphate. It participates in carbohydrate biosynthesis; gluconeogenesis. Its pathway is carbohydrate degradation; glycolysis; D-glyceraldehyde 3-phosphate from glycerone phosphate: step 1/1. In terms of biological role, involved in the gluconeogenesis. Catalyzes stereospecifically the conversion of dihydroxyacetone phosphate (DHAP) to D-glyceraldehyde-3-phosphate (G3P). The sequence is that of Triosephosphate isomerase from Neisseria meningitidis serogroup A / serotype 4A (strain DSM 15465 / Z2491).